The sequence spans 106 residues: MLMTTTPTLEGKPVQQYLGVVTGEAIIGANIFKDLFASIRNIVGGRAGAYERSLADAREVAMAEMAEQALKLGANAVIGIDIDYEVLGQDNGMLMVCVSGTAVITA.

The protein belongs to the UPF0145 family.

The chain is UPF0145 protein azo0572 from Azoarcus sp. (strain BH72).